A 360-amino-acid polypeptide reads, in one-letter code: NAD(P)H-quinone oxidoreductase subunit 1, chloroplastic (360 aa).

A run of 9 helical transmembrane segments spans residues 27 to 47, 98 to 118, 129 to 149, 165 to 185, 203 to 223, 248 to 268, 269 to 289, 297 to 317, and 340 to 360; these read IWIF…VLVI, FSIG…VIPF, IGIF…LMSG, AAQS…ISLL, FWGW…ISSL, YSGI…LISS, LFVT…ISIL, IFGT…FLFI, and FLLP…LFSL.

The protein belongs to the complex I subunit 1 family. In terms of assembly, NDH is composed of at least 16 different subunits, 5 of which are encoded in the nucleus.

Its subcellular location is the plastid. It localises to the chloroplast thylakoid membrane. The catalysed reaction is a plastoquinone + NADH + (n+1) H(+)(in) = a plastoquinol + NAD(+) + n H(+)(out). It carries out the reaction a plastoquinone + NADPH + (n+1) H(+)(in) = a plastoquinol + NADP(+) + n H(+)(out). Its function is as follows. NDH shuttles electrons from NAD(P)H:plastoquinone, via FMN and iron-sulfur (Fe-S) centers, to quinones in the photosynthetic chain and possibly in a chloroplast respiratory chain. The immediate electron acceptor for the enzyme in this species is believed to be plastoquinone. Couples the redox reaction to proton translocation, and thus conserves the redox energy in a proton gradient. The chain is NAD(P)H-quinone oxidoreductase subunit 1, chloroplastic from Barbarea verna (Land cress).